A 294-amino-acid polypeptide reads, in one-letter code: S-methyl-5'-thioadenosine phosphorylase (294 aa).

Residues Ser16, 58–59 (RH), and 91–92 (SA) contribute to the phosphate site. Met189 is a binding site for substrate. Thr190 is a phosphate binding site. Residue 213–215 (DFD) participates in substrate binding.

It belongs to the PNP/MTAP phosphorylase family. MTAP subfamily. In terms of assembly, homohexamer. Dimer of a homotrimer.

It catalyses the reaction S-methyl-5'-thioadenosine + phosphate = 5-(methylsulfanyl)-alpha-D-ribose 1-phosphate + adenine. It carries out the reaction 5'-deoxyadenosine + phosphate = 5-deoxy-alpha-D-ribose 1-phosphate + adenine. The protein operates within amino-acid biosynthesis; L-methionine biosynthesis via salvage pathway; S-methyl-5-thio-alpha-D-ribose 1-phosphate from S-methyl-5'-thioadenosine (phosphorylase route): step 1/1. Catalyzes the reversible phosphorylation of S-methyl-5'-thioadenosine (MTA) to adenine and 5-methylthioribose-1-phosphate. Involved in the breakdown of MTA, a major by-product of polyamine biosynthesis. Responsible for the first step in the methionine salvage pathway after MTA has been generated from S-adenosylmethionine. Has broad substrate specificity with 6-aminopurine nucleosides as preferred substrates. Also catalyzes the phosphorylation of 5'-deoxyadenosine (5'dAdo) to 5-deoxyribose 1-phosphate. Part of a bifunctional DHAP-shunt salvage pathway for SAM by-products. The sequence is that of S-methyl-5'-thioadenosine phosphorylase from Rhodospirillum rubrum (strain ATCC 11170 / ATH 1.1.1 / DSM 467 / LMG 4362 / NCIMB 8255 / S1).